We begin with the raw amino-acid sequence, 35 residues long: MSDIN-like toxin proprotein 1 (35 aa).

Positions 1–10 are excised as a propeptide; the sequence is MSDINATRLP. The segment at residues 11–20 is a cross-link (cyclopeptide (Ile-Pro)); that stretch reads IIIVLGLIIP. A propeptide spanning residues 21 to 35 is cleaved from the precursor; that stretch reads LCVSDIEMILTRGER.

This sequence belongs to the MSDIN fungal toxin family. In terms of processing, processed by the macrocyclase-peptidase enzyme POPB to yield a toxic cyclic decapeptide. POPB first removes 10 residues from the N-terminus. Conformational trapping of the remaining peptide forces the enzyme to release this intermediate rather than proceed to macrocyclization. The enzyme rebinds the remaining peptide in a different conformation and catalyzes macrocyclization of the N-terminal 10 residues.

Functionally, probable toxin that belongs to the MSDIN-like toxin family responsible for a large number of food poisoning cases and deaths. This chain is MSDIN-like toxin proprotein 1, found in Amanita rimosa.